Consider the following 413-residue polypeptide: MNTKISPLIKESLNKELKRQQSHIELIASENYVSKAVLELNGSVLTNKYAEGYPGKRYYGGCEFIDEIESLGIQTAKELFHAEHANIQPHSGSQANDAAYKALLEPKDRVVAMSLDAGGHLTHGYPINFSGYTYDFRFYGVNKDTEQLDYQEIEKIVLEHKPKLIVAGASAYSRIIDFKKFKEIADKVGAYLMVDMAHIAGLVAAGVHPNPLEYADIVTTTTHKTLRGARGGLILCKQEFAKKVDLAVFPGSQGGPLENLIAGKTQALLEASTDEFKEYGKQIVKNTKALANVLQENGLRLVAGGSDNHLINVDVKSTLRITGKKAEKILESIGIICNKNMIPFDTEKPFYTSGIRLGTPAMTTRGFKEEEFKQVGLIIVNALKDPSEENLEKLAKQVTSLCEKFPIYQNIKY.

(6S)-5,6,7,8-tetrahydrofolate contacts are provided by residues Leu115 and 119-121 (GHL). An N6-(pyridoxal phosphate)lysine modification is found at Lys224.

This sequence belongs to the SHMT family. Homodimer. Pyridoxal 5'-phosphate is required as a cofactor.

It is found in the cytoplasm. The catalysed reaction is (6R)-5,10-methylene-5,6,7,8-tetrahydrofolate + glycine + H2O = (6S)-5,6,7,8-tetrahydrofolate + L-serine. The protein operates within one-carbon metabolism; tetrahydrofolate interconversion. It functions in the pathway amino-acid biosynthesis; glycine biosynthesis; glycine from L-serine: step 1/1. Its function is as follows. Catalyzes the reversible interconversion of serine and glycine with tetrahydrofolate (THF) serving as the one-carbon carrier. This reaction serves as the major source of one-carbon groups required for the biosynthesis of purines, thymidylate, methionine, and other important biomolecules. Also exhibits THF-independent aldolase activity toward beta-hydroxyamino acids, producing glycine and aldehydes, via a retro-aldol mechanism. This chain is Serine hydroxymethyltransferase, found in Mycoplasma mycoides subsp. mycoides SC (strain CCUG 32753 / NCTC 10114 / PG1).